The following is a 2014-amino-acid chain: Fatty acid synthase beta subunit pigK (2014 aa).

The tract at residues 144 to 515 (LAAVFGGQST…KDGQGVRVII (372 aa)) is acetyltransferase (AT) domain. Serine 263 (for acetyltransferase activity) is an active-site residue. Positions 570-815 (SRLLDTPPLM…LITEASGVSD (246 aa)) are enoyl reductase (ER) domain. The segment at 1126–1606 (RSGSPWIHAL…LPGDRLLVNV (481 aa)) is dehydratase (DH) domain. The MaoC-like domain maps to 1514–1627 (PGWPGVSSLE…FNVSAFKQAT (114 aa)). Residues 1645-2005 (FFFTGQGSQK…VREVFNITQS (361 aa)) are malonyl/palmitoyl transferase (MT/PT) domain. Residue serine 1790 is the For malonyltransferase activity of the active site.

This sequence belongs to the fungal fatty acid synthetase subunit beta family. In terms of assembly, [Alpha(6)beta(6)] hexamers of two multifunctional subunits (alpha and beta).

The catalysed reaction is acetyl-CoA + n malonyl-CoA + 2n NADPH + 4n H(+) = a long-chain-acyl-CoA + n CoA + n CO2 + 2n NADP(+).. It catalyses the reaction holo-[ACP] + acetyl-CoA = acetyl-[ACP] + CoA. It carries out the reaction holo-[ACP] + malonyl-CoA = malonyl-[ACP] + CoA. The enzyme catalyses a (3R)-hydroxyacyl-[ACP] = a (2E)-enoyl-[ACP] + H2O. The catalysed reaction is a 2,3-saturated acyl-[ACP] + NAD(+) = a (2E)-enoyl-[ACP] + NADH + H(+). It catalyses the reaction (9Z)-octadecenoyl-[ACP] + H2O = (9Z)-octadecenoate + holo-[ACP] + H(+). The protein operates within secondary metabolite biosynthesis. In terms of biological role, fatty acid synthase subunit beta; part of the gene cluster that mediates the biosynthesis of azaphilone pigments (MonAzPs), a complex mixture of compounds with a common azaphilone skeleton very widely used as food colorants. PigJ and pigK form the two subunits of a dedicated fungal fatty acid synthase (FAS) that produces the side chain fatty acyl moiety of MonAzPs, a beta-keto fatty acid. The chain length control of the pigJ-pigK FAS is somewhat flexible as MonAzPs features either a beta-ketooctanoic or a beta-ketodecanoic acid moiety. The beta-ketoacyl-ACP probably serves as the substrate for the acetyltransferase pigD that directly transfers the fatty acyl chain to the C-4 alcohol of the pyran ring. The first step of the pathway is performed by the nrPKS pigA that forms the hexaketide precursor from successive condensations of five malonyl-CoA units, with a simple acetyl-CoA starter unit. The role of esterase pigG is not clear, but it may play at most a supplementary role in the formation of the benzaldehyde produced by the pigA nrPKS. This very reactive benzaldehyde is intercepted by the pigC ketoreductase that to provide the first stable enzyme-free MonAzPs intermediate, 6-(4-hydroxy-2-oxopentyl)-3-methyl-2,4-dioxocyclohexane carbaldehyde, also known as M7PKS-1. The FAD-dependent monooxygenase pigN hydroxylates M7PKS-1 at C-4, which triggers the formation of the pyran ring. PigJ, pigK and pigD are involved in the acetylation of the pyran ring. PigJ and pigK form the two subunits of a dedicated fungal FAS that produces the side chain fatty acyl moiety of MonAzPs and pigD transfers the fatty acyl chain to the C-4 alcohol. PigM and pigO are involved in the elimination of the omega-1 alcohol. PigM acts as an O-acetyltransferase that synthesizes the putative O-11 acetyl intermediate whereas pigO eliminates acetic acid to yield an intermediate with a C10(11) double bond. The dehydration of the C-11 alcohol followed by the reduction of the C6(7) double bond by the NAD(P)H-dependent oxidoreductase pigE increases the electrophilicity of the C-5 ketone of the resulting acyl benzopyran. This in turn sets up the C-5 ketone for an intramolecular Knoevenagel aldol condensation with the C-20 enol of the side chain. This condensation affords the characteristic linear tricyclic carbon skeletons of the yellow pigments that serve as the common precursors for the classical yellow pigments monascin and ankaflavin, orange pigments rubopunctatin and monascorubrin, and red pigments ribropunctamine and monascorubramine. The FAD-dependent oxidoreductase pigF is especially invoved in the biosynthesis of orange and red pigments via desaturation of C6(7). The polypeptide is Fatty acid synthase beta subunit pigK (Monascus ruber (Mold)).